The primary structure comprises 309 residues: Homoserine O-succinyltransferase (309 aa).

Cys-142 acts as the Acyl-thioester intermediate in catalysis. Positions 163 and 192 each coordinate substrate. His-235 acts as the Proton acceptor in catalysis. Glu-237 is an active-site residue. Substrate is bound at residue Arg-249.

Belongs to the MetA family. Homodimer.

Its subcellular location is the cytoplasm. The catalysed reaction is L-homoserine + succinyl-CoA = O-succinyl-L-homoserine + CoA. It participates in amino-acid biosynthesis; L-methionine biosynthesis via de novo pathway; O-succinyl-L-homoserine from L-homoserine: step 1/1. Transfers a succinyl group from succinyl-CoA to L-homoserine, forming succinyl-L-homoserine. The protein is Homoserine O-succinyltransferase of Escherichia coli (strain K12 / MC4100 / BW2952).